The following is a 420-amino-acid chain: Deoxyribodipyrimidine photo-lyase (420 aa).

In terms of domain architecture, Photolyase/cryptochrome alpha/beta spans 2-124; it reads GPLLVWHRGD…PLHLLPAPHL (123 aa). Residues 147–176 form a disordered region; sequence APPLPPPEALPKGPEEGEIPREDPGLPLPE. The segment covering 159 to 170 has biased composition (basic and acidic residues); it reads GPEEGEIPREDP. Y197 is a binding site for FAD. Residue R201 coordinates DNA. FAD contacts are provided by residues 209–213, W241, R248, N310, and 341–343; these read GSRLS and DGD. Interaction with DNA regions lie at residues 244–251 and 310–311; these read ELLWRDFS and NR. Q373 lines the DNA pocket.

Belongs to the DNA photolyase class-1 family. In terms of assembly, monomer. FAD is required as a cofactor.

The enzyme catalyses cyclobutadipyrimidine (in DNA) = 2 pyrimidine residues (in DNA).. Involved in repair of UV radiation-induced DNA damage. Catalyzes the light-dependent monomerization (300-600 nm) of cyclobutyl pyrimidine dimers (in cis-syn configuration), which are formed between adjacent bases on the same DNA strand upon exposure to ultraviolet radiation. The polypeptide is Deoxyribodipyrimidine photo-lyase (phr) (Thermus thermophilus (strain ATCC 27634 / DSM 579 / HB8)).